A 455-amino-acid polypeptide reads, in one-letter code: Probable galactarate/D-glucarate transporter GudP (455 aa).

12 consecutive transmembrane segments (helical) span residues 19–39 (WFIV…RATL), 59–79 (YVFS…GWLL), 87–107 (IIAL…AIGF), 108–128 (FSAG…GLSE), 153–173 (AFFN…MGWL), 177–197 (FGWH…AVIW), 253–273 (IGVY…LTWF), 289–309 (GFVA…GGIV), 320–340 (LTFA…SMIV), 348–368 (WLVV…ALGW), 386–406 (LFNT…GYIV), and 414–434 (GALV…LLLV).

Belongs to the major facilitator superfamily. Phthalate permease family.

The protein resides in the cell membrane. It carries out the reaction galactarate(in) + H(+)(in) = galactarate(out) + H(+)(out). The enzyme catalyses D-glucarate(in) + H(+)(in) = D-glucarate(out) + H(+)(out). In terms of biological role, probably involved in the uptake of galactarate and/or D-glucarate. The sequence is that of Probable galactarate/D-glucarate transporter GudP from Bacillus subtilis (strain 168).